The chain runs to 670 residues: Probable leucine-rich repeat receptor-like protein kinase At1g68400 (670 aa).

The first 29 residues, 1 to 29 (MAKSSFFNKHLLLSLLILLQSCLLSSSSS), serve as a signal peptide directing secretion. Residues 30–274 (TDSETLLNFK…KSNNTSRIST (245 aa)) are Extracellular-facing. Residues N52, N79, N102, N109, and N112 are each glycosylated (N-linked (GlcNAc...) asparagine). LRR repeat units follow at residues 69-91 (RVTR…TSLT), 92-114 (SLRV…SNLT), 115-137 (ALKL…ITSL), 139-162 (RLYR…TDLT), 163-185 (HLLT…NLSD), and 186-207 (LQDF…LSQF). Residues N149, N182, and N190 are each glycosylated (N-linked (GlcNAc...) asparagine). Positions 230-266 (SSDPTKPGRPDEAKASPLNKPETVPSSPTSIHGGDKS) are disordered. Positions 253–266 (VPSSPTSIHGGDKS) are enriched in polar residues. An N-linked (GlcNAc...) asparagine glycan is attached at N268. A helical transmembrane segment spans residues 275-295 (ISLIAIILGDFIILSFVSLLL). The Cytoplasmic segment spans residues 296-670 (YYCFWRQYAV…EDTCGGTTSQ (375 aa)). The Protein kinase domain occupies 362–636 (RASAEMLGKG…GHVVKLIEDI (275 aa)). S364 carries the post-translational modification Phosphoserine. Residues 368 to 376 (LGKGGFGTA) and K390 contribute to the ATP site. S443 bears the Phosphoserine mark. Residue T463 is modified to Phosphothreonine. Catalysis depends on D491, which acts as the Proton acceptor. At T616 the chain carries Phosphothreonine.

The protein belongs to the protein kinase superfamily. Ser/Thr protein kinase family.

It is found in the cell membrane. It carries out the reaction L-seryl-[protein] + ATP = O-phospho-L-seryl-[protein] + ADP + H(+). The enzyme catalyses L-threonyl-[protein] + ATP = O-phospho-L-threonyl-[protein] + ADP + H(+). The polypeptide is Probable leucine-rich repeat receptor-like protein kinase At1g68400 (Arabidopsis thaliana (Mouse-ear cress)).